Consider the following 681-residue polypeptide: SRSF protein kinase 2 (681 aa).

The tract at residues 1 to 63 (MSVNSEKSSS…EQEDPADYCK (63 aa)) is disordered. Positions 22–41 (LVPPPPPPPPPPPLPDPAPP) are enriched in pro residues. Acidic residues predominate over residues 42 to 59 (EPEEEILGSDDEEQEDPA). At Ser-50 the chain carries Phosphoserine. The Protein kinase domain occupies 79 to 681 (YHVIRKLGWG…ECLRHPWLNS (603 aa)). ATP contacts are provided by residues 85–93 (LGWGHFSTV) and Lys-108. The Proton acceptor role is filled by Asp-212. Disordered regions lie at residues 237-270 (WQKA…KKKL), 302-452 (ENIT…PLFS), and 467-499 (GSPL…KTKT). Residues Thr-331 and Thr-332 each carry the phosphothreonine modification. Ser-378 bears the Phosphoserine mark. Over residues 395–419 (QLEDEEDDEDDCANPEEYNLDEPNA) the composition is skewed to acidic residues. Residues 421–431 (SDYTYSSSYEQ) are compositionally biased toward polar residues. Ser-468 bears the Phosphoserine mark. Thr-471 carries the phosphothreonine modification. Ser-477, Ser-479, and Ser-483 each carry phosphoserine. Thr-485 carries the phosphothreonine; by PKB/AKT1 modification. Residues Ser-487 and Ser-490 each carry the phosphoserine modification. Residue Ser-581 is modified to Phosphoserine; by CK2.

The protein belongs to the protein kinase superfamily. CMGC Ser/Thr protein kinase family. As to quaternary structure, associates with U4/U6-U5 tri-small nuclear ribonucleoproteins (U4/U6-U5 tri-snRNPs). Interacts with PKB/AKT1 in a phosphorylation-dependent manner. The phosphorylated form (by PKB/AKT1) interacts with YWHAB and YWHAE. Interaction with YWHAB suppresses its cleavage by caspases and inhibits the release of its N-terminal pro-apoptotic fragment. Interacts with SFN. Interacts with ACIN1. Interacts with POLR2A/RNA polymerase II; the interaction occurs during the co-transcriptional formation of inappropriate R-loops. The cofactor is Mg(2+). Post-translationally, phosphorylation at Thr-485 by PKB/AKT1 enhances its stimulatory activity in triggering cyclin-D1 (CCND1) expression and promoting apoptosis in neurons, which can be blocked by YWHAB. It also enhances its protein kinase activity toward ACIN1 and SRSF2, promotes its nuclear translocation and prevents its proteolytic cleavage. Proteolytically cleaved at Asp-137 and Asp-401 by caspase-3 during apoptotic cell death. Cleavage at Asp-137 which is the major site of cleavage, produces a small N-terminal fragment that translocates into nucleus and promotes VP16-induced apoptosis. As to expression, expressed in testes, lung and brain.

It localises to the cytoplasm. It is found in the nucleus. The protein localises to the nucleoplasm. The protein resides in the nucleus speckle. Its subcellular location is the chromosome. The catalysed reaction is L-seryl-[protein] + ATP = O-phospho-L-seryl-[protein] + ADP + H(+). It carries out the reaction L-threonyl-[protein] + ATP = O-phospho-L-threonyl-[protein] + ADP + H(+). Its activity is regulated as follows. Activated by phosphorylation on Ser-50 and Ser-581. Its function is as follows. Serine/arginine-rich protein-specific kinase which specifically phosphorylates its substrates at serine residues located in regions rich in arginine/serine dipeptides, known as RS domains and is involved in the phosphorylation of SR splicing factors and the regulation of splicing. Promotes neuronal apoptosis by up-regulating cyclin-D1 (CCND1) expression. This is done by the phosphorylation of SRSF2, leading to the suppression of p53/TP53 phosphorylation thereby relieving the repressive effect of p53/TP53 on cyclin-D1 (CCND1) expression. Phosphorylates ACIN1, and redistributes it from the nuclear speckles to the nucleoplasm, resulting in cyclin A1 but not cyclin A2 up-regulation. Plays an essential role in spliceosomal B complex formation via the phosphorylation of DDX23/PRP28. Probably by phosphorylating DDX23, leads to the suppression of incorrect R-loops formed during transcription; R-loops are composed of a DNA:RNA hybrid and the associated non-template single-stranded DNA. The chain is SRSF protein kinase 2 from Mus musculus (Mouse).